The primary structure comprises 213 residues: RPW8-like protein 3 (213 aa).

Residues 1 to 153 (MPVSEIMAGA…ITRQPTDCIC (153 aa)) form the RPW8 domain. Residues 7–23 (MAGAALGLALQVLHDAI) form a helical membrane-spanning segment. Coiled-coil stretches lie at residues 70-93 (EDLK…RRRN) and 125-147 (VDIK…ITRQ). The N-linked (GlcNAc...) asparagine glycan is linked to Asn157.

Belongs to the plant RPW8 protein family.

It localises to the membrane. Probable disease resistance (R) protein. The chain is RPW8-like protein 3 from Arabidopsis thaliana (Mouse-ear cress).